The primary structure comprises 80 residues: DDDHSDDEPRESESSKPCCSSCCTRSRPPQCQCTDVRLNSCHSACKSCMCTFSDPGMCSCLDVTDFCYKPCKSSGDDDZZ.

The segment covering 1-10 has biased composition (acidic residues); sequence DDDHSDDEPR. A disordered region spans residues 1–29; that stretch reads DDDHSDDEPRESESSKPCCSSCCTRSRPP. Positions 15-29 are enriched in low complexity; it reads SKPCCSSCCTRSRPP. Intrachain disulfides connect cysteine 18–cysteine 71, cysteine 19–cysteine 33, cysteine 22–cysteine 67, cysteine 23–cysteine 31, cysteine 41–cysteine 48, cysteine 45–cysteine 60, and cysteine 50–cysteine 58.

This sequence belongs to the Bowman-Birk serine protease inhibitor family.

This Philenoptera violacea (Apple-leaf) protein is Bowman-Birk type proteinase inhibitor DE-4.